Reading from the N-terminus, the 552-residue chain is 4-coumarate--CoA ligase-like 4 (552 aa).

Positions 182–205 (ISATTPDPARRKDRVTQDDPATLL) are disordered. The segment covering 189–198 (PARRKDRVTQ) has biased composition (basic and acidic residues). 6 residues coordinate ATP: S207, S208, G209, T210, T211, and K215. Y256 is a binding site for (E)-4-coumaroyl-AMP. Residue K277 coordinates CoA. An SBD1 region spans residues 279-346 (ELPEMLRSIN…EKYPQVEILQ (68 aa)). Positions 324, 346, 347, and 351 each coordinate (E)-4-coumaroyl-AMP. Residues Q346, G347, T351, D432, and R447 each contribute to the ATP site. Positions 347–411 (GYGLTESTAI…IRGPYVMKGY (65 aa)) are SBD2. (E)-4-coumaroyl-AMP-binding residues include K449 and K453. CoA contacts are provided by K455 and G456. Residue K538 participates in ATP binding.

This sequence belongs to the ATP-dependent AMP-binding enzyme family. Mg(2+) is required as a cofactor.

It catalyses the reaction (E)-4-coumarate + ATP + CoA = (E)-4-coumaroyl-CoA + AMP + diphosphate. The enzyme catalyses (E)-4-coumarate + ATP + H(+) = (E)-4-coumaroyl-AMP + diphosphate. The catalysed reaction is (E)-4-coumaroyl-AMP + CoA = (E)-4-coumaroyl-CoA + AMP + H(+). In terms of biological role, carboxylate--CoA ligase that may use 4-coumarate as substrate. Follows a two-step reaction mechanism, wherein the carboxylate substrate first undergoes adenylation by ATP, followed by a thioesterification in the presence of CoA to yield the final CoA thioester. This is 4-coumarate--CoA ligase-like 4 (4CLL4) from Oryza sativa subsp. japonica (Rice).